The primary structure comprises 495 residues: AAA-ATPase At2g18193 (495 aa).

Residues 7 to 28 (FSFSPSSLFSAYASLTGFLMLF) form a helical membrane-spanning segment. Residue 250-257 (GPPGTGKS) coordinates ATP. The tract at residues 451 to 495 (EVSICKATDDDEKQNGSLGCVKKKKKGGKQKGKGKGKGKAKTYLI) is disordered. Over residues 471–495 (VKKKKKGGKQKGKGKGKGKAKTYLI) the composition is skewed to basic residues.

The protein belongs to the AAA ATPase family. BCS1 subfamily. It depends on Mg(2+) as a cofactor.

It localises to the membrane. The enzyme catalyses ATP + H2O = ADP + phosphate + H(+). The protein is AAA-ATPase At2g18193 of Arabidopsis thaliana (Mouse-ear cress).